The primary structure comprises 481 residues: uncharacterized protein (481 aa).

Residues 18-38 (FMIVTAIAVAIFVVITGVVIF) form a helical membrane-spanning segment.

The protein resides in the cell inner membrane. Involved in DNA conjugation in the recipient strain. This is an uncharacterized protein from Mycolicibacterium smegmatis (strain MKD8) (Mycobacterium smegmatis).